We begin with the raw amino-acid sequence, 357 residues long: Guanine nucleotide-binding protein alpha-1 subunit (357 aa).

Gly2 carries N-myristoyl glycine lipidation. The S-palmitoyl cysteine moiety is linked to residue Cys4. Residues 32–357 (NVIKLLLLGA…SSKLKGCGLF (326 aa)) form the G-alpha domain. The segment at 35 to 48 (KLLLLGAGESGKST) is G1 motif. GTP contacts are provided by Glu43, Ser44, Gly45, Lys46, Ser47, Thr48, Asp151, Leu176, Thr182, Gly204, Asn270, Lys271, Asp273, and Ala329. Mg(2+) is bound at residue Ser47. Residues 174–182 (DILHTRVPT) form a G2 motif region. Thr182 serves as a coordination point for Mg(2+). The segment at 197 to 206 (FRVFDVGGQR) is G3 motif. The G4 motif stretch occupies residues 266-273 (ILFLNKVD). Residues 327 to 332 (TCATDT) form a G5 motif region.

It belongs to the G-alpha family. G(q) subfamily. G proteins are composed of 3 units; alpha, beta and gamma. The alpha chain contains the guanine nucleotide binding site. Mg(2+) serves as cofactor.

Functionally, guanine nucleotide-binding proteins (G proteins) are involved as modulators or transducers in various transmembrane signaling systems. The sequence is that of Guanine nucleotide-binding protein alpha-1 subunit (gpa-1) from Caenorhabditis briggsae.